The sequence spans 1774 residues: U3 small nucleolar RNA-associated protein 10 (1774 aa).

The disordered stretch occupies residues 1206 to 1226; sequence YDKHSSAGSNDEEAGSESEAE. Over residues 1215-1226 the composition is skewed to acidic residues; sequence NDEEAGSESEAE. The stretch at 1734-1772 is one HEAT repeat; sequence LVPIIAELLEDEDEEVEYEVRSGLVKVVESVMGEPFDRY.

It belongs to the HEATR1/UTP10 family. Component of the ribosomal small subunit (SSU) processome.

It localises to the nucleus. It is found in the nucleolus. Functionally, involved in nucleolar processing of pre-18S ribosomal RNA. Involved in ribosome biosynthesis. The sequence is that of U3 small nucleolar RNA-associated protein 10 from Kluyveromyces lactis (strain ATCC 8585 / CBS 2359 / DSM 70799 / NBRC 1267 / NRRL Y-1140 / WM37) (Yeast).